The primary structure comprises 711 residues: Early transcription factor 82 kDa subunit (711 aa).

It belongs to the poxviridae VETF large subunit family. In terms of assembly, heterodimer of a 70 kDa and a 82 kDa subunit. Part of the early transcription complex composed of ETF, RAP94, and the DNA-directed RNA polymerase.

The protein localises to the virion. In terms of biological role, acts with RNA polymerase to initiate transcription from early gene promoters. Is recruited by the RPO-associated protein of 94 kDa (RAP94) to form the early transcription complex, which also contains the core RNA polymerase. ETF heterodimer binds to early gene promoters. The sequence is that of Early transcription factor 82 kDa subunit (VETFL) from Oryctolagus cuniculus (Rabbit).